The sequence spans 343 residues: Phosphoribosylformylglycinamidine cyclo-ligase (343 aa).

It belongs to the AIR synthase family.

The protein localises to the cytoplasm. It carries out the reaction 2-formamido-N(1)-(5-O-phospho-beta-D-ribosyl)acetamidine + ATP = 5-amino-1-(5-phospho-beta-D-ribosyl)imidazole + ADP + phosphate + H(+). It functions in the pathway purine metabolism; IMP biosynthesis via de novo pathway; 5-amino-1-(5-phospho-D-ribosyl)imidazole from N(2)-formyl-N(1)-(5-phospho-D-ribosyl)glycinamide: step 2/2. This chain is Phosphoribosylformylglycinamidine cyclo-ligase, found in Thermodesulfovibrio yellowstonii (strain ATCC 51303 / DSM 11347 / YP87).